The chain runs to 677 residues: Protein asunder (677 aa).

Positions 515-540 (RLKLSKAKDQYRLLYRELEQLIQLNS) form a coiled coil. Positions 578-598 (ESPLSPERLEPTSSSSSNSLL) are enriched in low complexity. A disordered region spans residues 578 to 604 (ESPLSPERLEPTSSSSSNSLLKARKRR). The Nuclear localization signal (NLS) motif lies at 598-604 (LKARKRR).

It belongs to the Integrator subunit 13 family. In terms of assembly, belongs to the multiprotein complex Integrator, at least composed of IntS1, IntS2, IntS3, IntS4, omd/IntS5, IntS6, defl/IntS7, IntS8, IntS9, IntS10, IntS11, IntS12, asun/IntS13, IntS14 and IntS15. The core complex associates with protein phosphatase 2A subunits mts/PP2A and Pp2A-29B, to form the Integrator-PP2A (INTAC) complex. In terms of processing, phosphorylated.

It is found in the nucleus. The protein localises to the cytoplasm. It localises to the perinuclear region. In terms of biological role, component of the integrator complex, a multiprotein complex that terminates RNA polymerase II (Pol II) transcription in the promoter-proximal region of genes. The integrator complex provides a quality checkpoint during transcription elongation by driving premature transcription termination of transcripts that are unfavorably configured for transcriptional elongation: the complex terminates transcription by (1) catalyzing dephosphorylation of the C-terminal domain (CTD) of Pol II subunit Polr2A/Rbp1 and Spt5, and (2) degrading the exiting nascent RNA transcript via endonuclease activity. The integrator complex is also involved in the 3'-end processing of the U7 snRNA, and also the spliceosomal snRNAs U1, U2, U4 and U5. The polypeptide is Protein asunder (asun) (Drosophila willistoni (Fruit fly)).